The sequence spans 535 residues: CTP synthase (535 aa).

An amidoligase domain region spans residues 1-268; sequence MSTKYIFVTG…DQIVCDHLKL (268 aa). Residue Ser-14 coordinates CTP. Residue Ser-14 coordinates UTP. 15–20 lines the ATP pocket; that stretch reads SMGKGI. Tyr-55 provides a ligand contact to L-glutamine. Asp-72 is an ATP binding site. 2 residues coordinate Mg(2+): Asp-72 and Glu-142. Residues 149–151, 189–194, and Lys-225 each bind CTP; these read DME and KTKIAQ. UTP is bound by residues 189 to 194 and Lys-225; that span reads KTKIAQ. In terms of domain architecture, Glutamine amidotransferase type-1 spans 293–535; the sequence is KIALVGKYVE…FIRVAVENSK (243 aa). Gly-355 serves as a coordination point for L-glutamine. Cys-382 functions as the Nucleophile; for glutamine hydrolysis in the catalytic mechanism. Residues 383–386, Glu-406, and Arg-464 contribute to the L-glutamine site; that span reads LGMQ. Catalysis depends on residues His-509 and Glu-511.

It belongs to the CTP synthase family. Homotetramer.

The enzyme catalyses UTP + L-glutamine + ATP + H2O = CTP + L-glutamate + ADP + phosphate + 2 H(+). It catalyses the reaction L-glutamine + H2O = L-glutamate + NH4(+). The catalysed reaction is UTP + NH4(+) + ATP = CTP + ADP + phosphate + 2 H(+). It participates in pyrimidine metabolism; CTP biosynthesis via de novo pathway; CTP from UDP: step 2/2. Its activity is regulated as follows. Allosterically activated by GTP, when glutamine is the substrate; GTP has no effect on the reaction when ammonia is the substrate. The allosteric effector GTP functions by stabilizing the protein conformation that binds the tetrahedral intermediate(s) formed during glutamine hydrolysis. Inhibited by the product CTP, via allosteric rather than competitive inhibition. Functionally, catalyzes the ATP-dependent amination of UTP to CTP with either L-glutamine or ammonia as the source of nitrogen. Regulates intracellular CTP levels through interactions with the four ribonucleotide triphosphates. The sequence is that of CTP synthase from Lactococcus lactis subsp. lactis (strain IL1403) (Streptococcus lactis).